A 121-amino-acid chain; its full sequence is Large ribosomal subunit protein bL19 (121 aa).

The protein belongs to the bacterial ribosomal protein bL19 family.

This protein is located at the 30S-50S ribosomal subunit interface and may play a role in the structure and function of the aminoacyl-tRNA binding site. This chain is Large ribosomal subunit protein bL19, found in Symbiobacterium thermophilum (strain DSM 24528 / JCM 14929 / IAM 14863 / T).